Reading from the N-terminus, the 270-residue chain is Sorting nexin-11 (270 aa).

Residues 16 to 132 (VITVRVQDPR…HLFLQSQLSV (117 aa)) form the PX domain. Residues Arg-59, Lys-85, and Arg-99 each contribute to the a 1,2-diacyl-sn-glycero-3-phospho-(1D-myo-inositol-3-phosphate) site. Residues 135-139 (IEACV) form an important for membrane trafficking region. Positions 168–177 (SSSHLAKGDQ) are enriched in basic and acidic residues. The segment at 168–203 (SSSHLAKGDQPKSCCFLPRSGRRSSPSPPPSEEKDH) is disordered.

Belongs to the sorting nexin family. In terms of assembly, monomer. Interacts with TRPV3; this interaction promotes TRPV3 trafficking from the cell membrane to lysosome for degradation.

It localises to the cell membrane. The protein localises to the endosome. Its subcellular location is the cytoplasm. In terms of biological role, phosphoinositide-binding protein involved in protein sorting and membrane trafficking in endosomes. Regulates the levels of TRPV3 by promoting its trafficking from the cell membrane to lysosome for degradation. The chain is Sorting nexin-11 (SNX11) from Homo sapiens (Human).